The primary structure comprises 284 residues: Diaminopimelate epimerase (284 aa).

Residues Asn20, Gln53, and Asn73 each contribute to the substrate site. Cys82 acts as the Proton donor in catalysis. Substrate is bound by residues 83–84 (GN), Asn167, Asn200, and 218–219 (ER). Cys227 (proton acceptor) is an active-site residue. Position 228–229 (228–229 (GS)) interacts with substrate.

Belongs to the diaminopimelate epimerase family. Homodimer.

Its subcellular location is the cytoplasm. The catalysed reaction is (2S,6S)-2,6-diaminopimelate = meso-2,6-diaminopimelate. It functions in the pathway amino-acid biosynthesis; L-lysine biosynthesis via DAP pathway; DL-2,6-diaminopimelate from LL-2,6-diaminopimelate: step 1/1. In terms of biological role, catalyzes the stereoinversion of LL-2,6-diaminopimelate (L,L-DAP) to meso-diaminopimelate (meso-DAP), a precursor of L-lysine and an essential component of the bacterial peptidoglycan. This chain is Diaminopimelate epimerase, found in Xanthomonas campestris pv. campestris (strain ATCC 33913 / DSM 3586 / NCPPB 528 / LMG 568 / P 25).